Reading from the N-terminus, the 494-residue chain is Aspartyl/glutamyl-tRNA(Asn/Gln) amidotransferase subunit B (494 aa).

It belongs to the GatB/GatE family. GatB subfamily. In terms of assembly, heterotrimer of A, B and C subunits.

It carries out the reaction L-glutamyl-tRNA(Gln) + L-glutamine + ATP + H2O = L-glutaminyl-tRNA(Gln) + L-glutamate + ADP + phosphate + H(+). It catalyses the reaction L-aspartyl-tRNA(Asn) + L-glutamine + ATP + H2O = L-asparaginyl-tRNA(Asn) + L-glutamate + ADP + phosphate + 2 H(+). In terms of biological role, allows the formation of correctly charged Asn-tRNA(Asn) or Gln-tRNA(Gln) through the transamidation of misacylated Asp-tRNA(Asn) or Glu-tRNA(Gln) in organisms which lack either or both of asparaginyl-tRNA or glutaminyl-tRNA synthetases. The reaction takes place in the presence of glutamine and ATP through an activated phospho-Asp-tRNA(Asn) or phospho-Glu-tRNA(Gln). The sequence is that of Aspartyl/glutamyl-tRNA(Asn/Gln) amidotransferase subunit B from Nitrobacter hamburgensis (strain DSM 10229 / NCIMB 13809 / X14).